Reading from the N-terminus, the 410-residue chain is MGERFFRNEMPEFVPEDLSGEEETVTECKDSLTKLLSLPYKSFSEKLHRYALSIKDKVVWETWERSGKRVRDYNLYTGVLGTAYLLFKSYQVTRNEDDLKLCLENVEACDVASRDSERVTFICGYAGVCALGAVAAKCLGDDQLYDRYLARFRGIRLPSDLPYELLYGRAGYLWACLFLNKHIGQESISSERMRSVVEEIFRAGRQLGNKGTCPLMYEWHGKRYWGAAHGLAGIMNVLMHTELEPDEIKDVKGTLSYMIQNRFPSGNYLSSEGSKSDRLVHWCHGAPGVALTLVKAAQVYNTKEFVEAAMEAGEVVWSRGLLKRVGICHGISGNTYVFLSLYRLTRNPKYLYRAKAFASFLLDKSEKLISEGQMHGGDRPFSLFEGIGGMAYMLLDMNDPTQALFPGYEL.

Zn(2+)-binding residues include Cys-283, Cys-328, and His-329.

The protein belongs to the LanC-like protein family. As to quaternary structure, may interact (via C-terminus) with GPA1.

May play a role in abscisic acid (ABA) signaling. In Arabidopsis thaliana (Mouse-ear cress), this protein is LanC-like protein GCR2 (GCR2).